Consider the following 215-residue polypeptide: Ras-like GTP-binding protein RHO1 (215 aa).

6 residues coordinate GTP: Ala30, Val31, Gly32, Lys33, Thr34, and Cys35. Residue Thr34 coordinates Mg(2+). 2 short sequence motifs (switch) span residues 43–54 (GEIPTAYVPTVF) and 74–93 (DTAGQEEYDRLRPLSYADSD). Thr52 is a binding site for Mg(2+). Residues Asp135 and Ser166 each coordinate GTP. The segment at 194–215 (VTTQAKSQESTQQKKKSKCLLQ) is disordered. Over residues 195–204 (TTQAKSQEST) the composition is skewed to low complexity. Over residues 206-215 (QKKKSKCLLQ) the composition is skewed to basic residues. The residue at position 212 (Cys212) is a Cysteine methyl ester. Cys212 is lipidated: S-geranylgeranyl cysteine. A propeptide spans 213–215 (LLQ) (removed in mature form).

The protein belongs to the small GTPase superfamily. Rho family. In terms of assembly, interacts (GTP-bound form) with formin1 (via GBD/FH3 domain); the interaction activates formin1. Interacts (GTP-bound form) with profilin1. Interacts (GDP-bound form and when prenylated) with RhoGDI. Requires Mg(2+) as cofactor.

It is found in the cell membrane. It localises to the cytoplasm. The protein localises to the cytoskeleton. The protein resides in the cell projection. Its subcellular location is the phagocytic cup. It is found in the cytoplasmic vesicle. It localises to the phagosome. It carries out the reaction GTP + H2O = GDP + phosphate + H(+). Regulated by guanine nucleotide exchange factors (GEFs) which promote the exchange of bound GDP for free GTP, GTPase activating proteins (GAPs) which increase the GTP hydrolysis activity and GDP dissociation inhibitors which inhibit the dissociation of the nucleotide from the GTPase. Functionally, small GTPase which cycles between active GTP-bound and inactive GDP-bound states. Involved in actin cytoskeleton remodeling. Regulates phagocytosis by modulating actin cytoskeleton dynamics through the recruitment of formin1 and profilin1 to the phagocytosis nucleation site. This Entamoeba histolytica (strain ATCC 30459 / HM-1:IMSS / ABRM) protein is Ras-like GTP-binding protein RHO1.